The primary structure comprises 59 residues: Large ribosomal subunit protein bL32 (59 aa).

The interval 1–59 is disordered; the sequence is MAVQQNKKSPSKRGMHRSHDALTAPALFVDSTTGEVHRPHHISPNGMYRGRKVVKAKGE. Over residues 49 to 59 the composition is skewed to basic residues; that stretch reads RGRKVVKAKGE.

The protein belongs to the bacterial ribosomal protein bL32 family.

The sequence is that of Large ribosomal subunit protein bL32 from Neisseria gonorrhoeae (strain ATCC 700825 / FA 1090).